Reading from the N-terminus, the 518-residue chain is ATPase expression protein 2, mitochondrial (518 aa).

A mitochondrion-targeting transit peptide spans 1–15; the sequence is MLKKSRVLGKIPIPY.

The protein belongs to the AEP2 family. Binds to the 5'UTR of the OLI1 mRNA.

It localises to the mitochondrion. Functionally, required for translation of the mitochondrial OLI1 transcript coding for the mitochondrial ATP synthase subunit 9. The chain is ATPase expression protein 2, mitochondrial (AEP2) from Kluyveromyces lactis (strain ATCC 8585 / CBS 2359 / DSM 70799 / NBRC 1267 / NRRL Y-1140 / WM37) (Yeast).